Here is a 490-residue protein sequence, read N- to C-terminus: GTPase Der (490 aa).

EngA-type G domains lie at 1-165 (MRIA…QIPV) and 227-400 (LKVA…TIAT). Residues 7-14 (GRPNVGKS), 54-58 (DTGGV), 117-120 (NKAD), 233-240 (GHPNVGKS), 280-284 (DTAGL), and 345-348 (NKWD) each bind GTP. The KH-like domain occupies 401–485 (TKLSTSLVNK…PFDLEYKAKP (85 aa)).

It belongs to the TRAFAC class TrmE-Era-EngA-EngB-Septin-like GTPase superfamily. EngA (Der) GTPase family. In terms of assembly, associates with the 50S ribosomal subunit.

GTPase that plays an essential role in the late steps of ribosome biogenesis. The polypeptide is GTPase Der (Chlamydia trachomatis serovar L2b (strain UCH-1/proctitis)).